Consider the following 803-residue polypeptide: Zinc finger protein 226 (803 aa).

Residues 8 to 78 (VTFKDVAVAF…TTATRRQGNL (71 aa)) form the KRAB domain. The C2H2-type 1; degenerate zinc-finger motif lies at 252 to 274 (YQCNECKKPFSDLSSFDLHQQLQ). The segment at 280-302 (LTCVERGKGFCYSPVLPVHQKVH) adopts a C2H2-type 2; degenerate zinc-finger fold. 17 C2H2-type zinc fingers span residues 307–329 (LKCDECGKEFSQGAHLQTHQKVH), 335–357 (YKCKQCGKGFSRRSALNVHCKVH), 363–385 (YNCEECGRAFSQASHLQDHQRLH), 391–413 (FKCDACGKSFSRNSHLQSHQRVH), 419–441 (YKCEECGKGFICSSNLYIHQRVH), 447–469 (YKCEECGKGFSRPSSLQAHQGVH), 475–497 (YICTVCGKGFTLSSNLQAHQRVH), 503–525 (YKCNECGKSFRRNSHYQVHLVVH), 531–553 (YKCEICGKGFSQSSYLQIHQKAH), 559–581 (FKCEECGQGFNQSSRLQIHQLIH), 587–609 (YKCEECGKGFSRRADLKIHCRIH), 615–637 (YNCEECGKVFRQASNLLAHQRVH), 643–665 (FKCEECGKSFGRSAHLQAHQKVH), 671–693 (YKCDECGKGFKWSLNLDMHQRVH), 699–721 (YKCGECGKYFSQASSLQLHQSVH), 727–749 (YKCDVCGKVFSRSSQLQSHQRVH), and 755–777 (YKCEICGKSFSWRSNLTVHHRIH). A disordered region spans residues 781–803 (KSYKSNRGGKNIRESTQEKKSIK). The span at 791–803 (NIRESTQEKKSIK) shows a compositional bias: basic and acidic residues.

This sequence belongs to the krueppel C2H2-type zinc-finger protein family.

The protein localises to the nucleus. May be involved in transcriptional regulation. The protein is Zinc finger protein 226 (ZNF226) of Homo sapiens (Human).